The sequence spans 194 residues: Cysteine and glycine-rich protein 2 (194 aa).

The region spanning 10 to 61 is the LIM zinc-binding 1 domain; it reads CGACGRTVYHAEEVQCDGRSFHRCCFLCMVCRKNLDSTTVAIHDAEVYCKSC. Residues 64–69 carry the Nuclear localization signal motif; that stretch reads KKYGPK. The disordered stretch occupies residues 85–110; the sequence is GERLGIKPESSPSPHRPTTNPNTSKF. Polar residues predominate over residues 94-110; sequence SSPSPHRPTTNPNTSKF. Residues 120-171 enclose the LIM zinc-binding 2 domain; sequence CSRCGDSVYAAEKVIGAGKPWHKNCFRCAKCGKSLESTTLTEKEGEIYCKGC.

The protein localises to the nucleus. Interacts with zyxin. May be a component of a signal transduction pathway that mediates adhesion-stimulated changes in gene expression. Totally down-regulated in transformed cells. This chain is Cysteine and glycine-rich protein 2 (CSRP2), found in Coturnix japonica (Japanese quail).